Consider the following 148-residue polypeptide: MTWAIVMLILMSLVKIVLTCLPTGVIEWLLGKFEVHAKLSDENASLSLDGKRLEGAEKQKVIDQFNEAIFLEKYYIYPGDEERYLHPENGGTPLVIDTKKGKKDVKLFVYRYDDHIDVVKQYKKKVIAYRVLSESLQKESLSVAGSLA.

The helical transmembrane segment at 7-29 (MLILMSLVKIVLTCLPTGVIEWL) threads the bilayer.

It localises to the membrane. This is an uncharacterized protein from Bacillus subtilis (strain 168).